Consider the following 261-residue polypeptide: Protein FAM216A (261 aa).

The tract at residues M1–S52 is disordered. Polar residues predominate over residues S23–T35. Residues G36–R49 are compositionally biased toward basic and acidic residues.

The protein belongs to the FAM216 family.

The protein is Protein FAM216A (Fam216a) of Rattus norvegicus (Rat).